Reading from the N-terminus, the 342-residue chain is (Lyso)-N-acylphosphatidylethanolamine lipase (342 aa).

The 132-residue stretch at 70 to 201 (PLVMVHGFGG…KAVASVLGRS (132 aa)) folds into the AB hydrolase-1 domain.

This sequence belongs to the peptidase S33 family. ABHD4/ABHD5 subfamily.

The catalysed reaction is N-hexadecanoyl-1,2-di-(9Z-octadecenoyl)-sn-glycero-3-phosphoethanolamine + H2O = N-hexadecanoyl-1-(9Z-octadecenoyl)-sn-glycero-3-phosphoethanolamine + (9Z)-octadecenoate + H(+). It carries out the reaction an N-acyl-1,2-diacyl-sn-glycero-3-phosphoethanolamine + H2O = N,1-diacyl-sn-glycero-3-phosphoethanolamine + a fatty acid + H(+). The enzyme catalyses N-hexadecanoyl-1-(9Z-octadecenoyl)-sn-glycero-3-phosphoethanolamine + H2O = N-hexadecanoyl-sn-glycero-3-phosphoethanolamine + (9Z)-octadecenoate + H(+). It catalyses the reaction N-octadecanoyl-1-(9Z-octadecenoyl)-sn-glycero-3-phosphoethanolamine + H2O = N-octadecanoyl-sn-glycero-3-phospho-ethanolamine + (9Z)-octadecenoate + H(+). The catalysed reaction is N-eicosanoyl-1-(9Z-octadecenoyl)-sn-glycero-3-phosphoethanolamine + H2O = N-eicosanoyl-sn-glycero-3-phosphoethanolamine + (9Z)-octadecenoate + H(+). It carries out the reaction N,1-di-(9Z-octadecenoyl)-sn-glycero-3-phosphoethanolamine + H2O = N-(9Z-octadecenoyl)-sn-glycero-3-phosphoethanolamine + (9Z)-octadecenoate + H(+). The enzyme catalyses N-(5Z,8Z,11Z,14Z-eicosatetraenoyl)-1-(9Z-octadecenoyl)-sn-glycero-3-phosphoethanolamine + H2O = N-(5Z,8Z,11Z,14Z-eicosatetraenoyl)-sn-glycero-3-phosphoethanolamine + (9Z)-octadecenoate + H(+). It catalyses the reaction 1-octadecanoyl-2-(9Z-octadecenoyl)-sn-glycero-3-phospho-(N-hexadecanoyl)-serine + H2O = 1-octadecanoyl-2-hydroxy-sn-glycero-3-phospho-(N-hexadecanoyl)-serine + (9Z)-octadecenoate + H(+). The catalysed reaction is 1-O-(1Z-octadecenoyl)-2-(9Z-octadecenoyl)-sn-glycero-3-phospho-N-hexadecanoyl-ethanolamine + H2O = 1-O-(1Z-octadecenyl)-sn-glycero-3-phospho-N-hexadecanoyl-ethanolamine + (9Z)-octadecenoate + H(+). It carries out the reaction N,1-diacyl-sn-glycero-3-phosphoethanolamine + H2O = N-acyl-sn-glycero-3-phosphoethanolamine + a fatty acid + H(+). Its function is as follows. Lysophospholipase selective for N-acyl phosphatidylethanolamine (NAPE). Contributes to the biosynthesis of N-acyl ethanolamines, including the endocannabinoid anandamide by hydrolyzing the sn-1 and sn-2 acyl chains from N-acyl phosphatidylethanolamine (NAPE) generating glycerophospho-N-acyl ethanolamine (GP-NAE), an intermediate for N-acyl ethanolamine biosynthesis. Hydrolyzes substrates bearing saturated, monounsaturated, polyunsaturated N-acyl chains. Shows no significant activity towards other lysophospholipids, including lysophosphatidylcholine, lysophosphatidylethanolamine and lysophosphatidylserine. The protein is (Lyso)-N-acylphosphatidylethanolamine lipase of Homo sapiens (Human).